A 281-amino-acid chain; its full sequence is Large ribosomal subunit protein uL2 (281 aa).

A disordered region spans residues 215–281; sequence LGRRPHTRGV…RRNNRKDSKK (67 aa). The segment covering 258–269 has biased composition (basic and acidic residues); the sequence is KTRDNKSTDKFI. A compositionally biased stretch (basic residues) spans 270–281; it reads VRRRNNRKDSKK.

The protein belongs to the universal ribosomal protein uL2 family. Part of the 50S ribosomal subunit. Forms a bridge to the 30S subunit in the 70S ribosome.

In terms of biological role, one of the primary rRNA binding proteins. Required for association of the 30S and 50S subunits to form the 70S ribosome, for tRNA binding and peptide bond formation. It has been suggested to have peptidyltransferase activity; this is somewhat controversial. Makes several contacts with the 16S rRNA in the 70S ribosome. The polypeptide is Large ribosomal subunit protein uL2 (Pelagibacter ubique (strain HTCC1062)).